The following is a 392-amino-acid chain: Small ribosomal subunit protein bS1 (392 aa).

4 S1 motif domains span residues 16–90 (GDKV…LSKR), 108–173 (DEII…LSRK), 194–262 (GDVI…LSIK), and 279–348 (DDVI…LSIK).

This sequence belongs to the bacterial ribosomal protein bS1 family.

Its function is as follows. Binds mRNA; thus facilitating recognition of the initiation point. It is needed to translate mRNA with a short Shine-Dalgarno (SD) purine-rich sequence. The chain is Small ribosomal subunit protein bS1 (rpsA) from Staphylococcus haemolyticus (strain JCSC1435).